The chain runs to 262 residues: MKAAWSGFLLSVQFLTVIPIRKQIDWNAATARWSVRAFPLVGALIGVIEAVTYFIFSSFSSLSPLFLALSLMWLSIWIAGGLHADGWMDVSDAFFSYRDIKRRQEIMSDSRVGAFAVLSILCLLSFRFLFVFETIRSHLDIFLISVIPLLSRTAMAWLLIYGKPAKQTGMAAAFREHADRYDAHVAMIIGNCLLACLCAIHFSVWKTVIFLACGTIFAVFVARLFFEKQFGGITGDALGAFVEGVETWLWCMIWLLRSYVMV.

The next 8 membrane-spanning stretches (helical) occupy residues 4–21, 37–57, 62–82, 112–132, 141–161, 181–201, 202–222, and 236–256; these read AWSG…IPIR, AFPL…FIFS, LSPL…AGGL, VGAF…LFVF, IFLI…LLIY, YDAH…CAIH, FSVW…VFVA, and DALG…IWLL.

It belongs to the CobS family. Mg(2+) serves as cofactor.

The protein resides in the cell membrane. The enzyme catalyses alpha-ribazole + adenosylcob(III)inamide-GDP = adenosylcob(III)alamin + GMP + H(+). The catalysed reaction is alpha-ribazole 5'-phosphate + adenosylcob(III)inamide-GDP = adenosylcob(III)alamin 5'-phosphate + GMP + H(+). Its pathway is cofactor biosynthesis; adenosylcobalamin biosynthesis; adenosylcobalamin from cob(II)yrinate a,c-diamide: step 7/7. In terms of biological role, joins adenosylcobinamide-GDP and alpha-ribazole to generate adenosylcobalamin (Ado-cobalamin). Also synthesizes adenosylcobalamin 5'-phosphate from adenosylcobinamide-GDP and alpha-ribazole 5'-phosphate. This Geobacillus sp. (strain WCH70) protein is Adenosylcobinamide-GDP ribazoletransferase.